The following is a 258-amino-acid chain: UPF0246 protein YaaA (258 aa).

The protein belongs to the UPF0246 family.

This Shigella dysenteriae serotype 1 (strain Sd197) protein is UPF0246 protein YaaA.